Consider the following 207-residue polypeptide: Holliday junction resolvase RecU (207 aa).

The segment at Met-1 to Ser-21 is disordered. Mg(2+)-binding residues include Thr-87, Asp-89, Glu-102, and Gln-121.

The protein belongs to the RecU family. Mg(2+) serves as cofactor.

The protein localises to the cytoplasm. It catalyses the reaction Endonucleolytic cleavage at a junction such as a reciprocal single-stranded crossover between two homologous DNA duplexes (Holliday junction).. Functionally, endonuclease that resolves Holliday junction intermediates in genetic recombination. Cleaves mobile four-strand junctions by introducing symmetrical nicks in paired strands. Promotes annealing of linear ssDNA with homologous dsDNA. Required for DNA repair, homologous recombination and chromosome segregation. This chain is Holliday junction resolvase RecU, found in Lactiplantibacillus plantarum (strain ATCC BAA-793 / NCIMB 8826 / WCFS1) (Lactobacillus plantarum).